A 123-amino-acid chain; its full sequence is Con-ikot-ikot (123 aa).

Positions 1 to 18 are cleaved as a signal peptide; sequence MAMNMSMTLCMFVMVVVA. Residues 19–37 constitute a propeptide that is removed on maturation; sequence ATVIDSTQLQEPDLSRMRR. Intrachain disulfides connect Cys-49–Cys-80, Cys-50–Cys-89, Cys-57–Cys-72, Cys-90–Cys-118, and Cys-96–Cys-113.

Homodimer; disulfide-linked. Expressed by the venom duct.

It localises to the secreted. Potently and selectively blocks the desensitization of ionotropic glutamate AMPA receptors (GRIA1, GRIA2, GRIA3 and GRIA4). Binds to a different site than does the drug cyclothiazide. The toxin acts like a straitjacket on the 'gating ring' of the ligand-binding domain (LBD) of the receptor. It does so by restraining the domains via both intra- and interdimer cross-links such that agonist-induced closure of the LBD 'clamshells' is transduced into an irislike expansion of the gating ring. Compared to other desensitization blockers, it is a poor stabilizer of the open channel because toxin-bound AMPA receptors undergo frequent brief closures. In vitro, application of the toxin to hippocampal slices causes a large and rapid increase in resting AMPA receptor-mediated current leading to neuronal death. The polypeptide is Con-ikot-ikot (Conus striatus (Striated cone)).